An 846-amino-acid chain; its full sequence is Auxin response factor 2A (846 aa).

Positions 1–12 are enriched in polar residues; the sequence is MAASEVSIQGYS. Residues 1–30 form a disordered region; it reads MAASEVSIQGYSEPSDGSRPVSETGRSSSG. The TF-B3 DNA-binding region spans 146–248; the sequence is FCKTLTASDT…ELRVGVRRAM (103 aa). Disordered stretches follow at residues 380–423 and 660–693; these read PPAL…HSQA and DMNI…GVAA. 2 stretches are compositionally biased toward polar residues: residues 398 to 408 and 414 to 423; these read ILPTSPDSSVL and SRATADHSQA. Residues 675 to 693 show a composition bias toward basic and acidic residues; that stretch reads SDQRSEQSKGSKVDDGVAA. The region spanning 720 to 804 is the PB1 domain; that stretch reads RSCTKVHKQG…RKIFIYTKEE (85 aa). Composition is skewed to polar residues over residues 809–824 and 836–846; these read NPGT…SSVA and QLPSESGQAES. A disordered region spans residues 809–846; sequence NPGTLNSKGEDTSSVAEGSDAKEVKNLQLPSESGQAES.

This sequence belongs to the ARF family. As to quaternary structure, homodimers and heterodimers. Interacts with ASR1. In terms of tissue distribution, expressed in root, leaf and flower. Expressed in flower buds about three days before opening including ovary, petal and sepal with the highest in stamen. Expressed in stem. Expressed in fruit. Expressed in seeds.

Its subcellular location is the nucleus. Functionally, auxin response factors (ARFs) are transcriptional factors that bind specifically to the DNA sequence 5'-TGTCTC-3' found in the auxin-responsive promoter elements (AuxREs). Could act as transcriptional activator or repressor. Involved in the control of fruit ripening process. Regulates expression of a number of ripening regulators, transcription factors, and ethylene biosynthesis and signaling components. May act as a transcriptional repressor of auxin-responsive genes. Regulates vegetative growth, lateral root formation and flower organ senescence, possibly partially by regulating gene expression of auxin and ethylene response factor (ERF) genes. Plays a negative role in axillary shoot meristem formation. The protein is Auxin response factor 2A of Solanum lycopersicum (Tomato).